We begin with the raw amino-acid sequence, 493 residues long: Tripartite motif-containing protein 5 (493 aa).

Ala2 carries the N-acetylalanine modification. The RING-type zinc-finger motif lies at 15 to 58 (CPICLELLTQPLSLDCGHSFCQACLTANHKTSMPDGERSCPVCR). At Ser85 the chain carries Phosphoserine. The B box-type zinc-finger motif lies at 90 to 131 (QKVDHCARHGEKLLLFCREDRKVICWLCERSQEHRGHHTFLM). Positions 95, 98, 117, and 123 each coordinate Zn(2+). A coiled-coil region spans residues 130-240 (LMEEVAQEYQ…LISDLEHRLQ (111 aa)). Residues 185-198 (FEQLRHILDWVESN) are required for interaction with GABARAP and for autophagy. The region spanning 281–493 (LQVTLEVLRE…VPMTLCSPSS (213 aa)) is the B30.2/SPRY domain.

This sequence belongs to the TRIM/RBCC family. In terms of assembly, can form homodimers and homotrimers. In addition to lower-order dimerization, also exhibits a higher-order multimerization and both low- and high-order multimerizations are essential for its restriction activity. Interacts with BTBD1 and BTBD2. Interacts with PSMC4, PSMC5, PSMD7 and HSPA8/HSC70. Interacts (via B30.2/SPRY domain) with HSPA1A/B. Interacts with PSMC2, MAP3K7/TAK1, TAB2 and TAB3. Interacts with SQSTM1. Interacts with TRIM6 and TRIM34. Interacts with ULK1 (phosphorylated form), GABARAP, GABARAPL1, GABARAPL2, MAP1LC3A, MAP1LC3C and BECN1. In terms of processing, degraded in a proteasome-independent fashion in the absence of viral infection but in a proteasome-dependent fashion following exposure to restriction sensitive virus. Autoubiquitinated in a RING finger- and UBE2D2-dependent manner. Monoubiquitinated by TRIM21. Deubiquitinated by Yersinia YopJ. Ubiquitination may not lead to proteasomal degradation.

It is found in the cytoplasm. The protein resides in the nucleus. The catalysed reaction is S-ubiquitinyl-[E2 ubiquitin-conjugating enzyme]-L-cysteine + [acceptor protein]-L-lysine = [E2 ubiquitin-conjugating enzyme]-L-cysteine + N(6)-ubiquitinyl-[acceptor protein]-L-lysine.. The protein operates within protein modification; protein ubiquitination. Functionally, capsid-specific restriction factor that prevents infection from non-host-adapted retroviruses. Blocks viral replication early in the life cycle, after viral entry but before reverse transcription. In addition to acting as a capsid-specific restriction factor, also acts as a pattern recognition receptor that activates innate immune signaling in response to the retroviral capsid lattice. Binding to the viral capsid triggers its E3 ubiquitin ligase activity, and in concert with the heterodimeric ubiquitin conjugating enzyme complex UBE2V1-UBE2N (also known as UBC13-UEV1A complex) generates 'Lys-63'-linked polyubiquitin chains, which in turn are catalysts in the autophosphorylation of the MAP3K7/TAK1 complex (includes TAK1, TAB2, and TAB3). Activation of the MAP3K7/TAK1 complex by autophosphorylation results in the induction and expression of NF-kappa-B and MAPK-responsive inflammatory genes, thereby leading to an innate immune response in the infected cell. Plays a role in regulating autophagy through activation of autophagy regulator BECN1 by causing its dissociation from its inhibitors BCL2 and TAB2. This chain is Tripartite motif-containing protein 5 (TRIM5), found in Hylobates lar (Lar gibbon).